The sequence spans 314 residues: Protoheme IX farnesyltransferase (314 aa).

The next 8 membrane-spanning stretches (helical) occupy residues 36 to 56 (IGIV…AISF), 65 to 85 (WGTF…GCIV), 114 to 134 (SVLT…MFTS), 135 to 155 (WYAT…YTIW), 179 to 199 (WAAI…IMFI), 237 to 257 (IIVY…TMGI), 259 to 279 (FAVI…TGLF), and 290 to 310 (IFIF…IVKL).

This sequence belongs to the UbiA prenyltransferase family. Protoheme IX farnesyltransferase subfamily. In terms of assembly, interacts with CtaA.

Its subcellular location is the cell membrane. It catalyses the reaction heme b + (2E,6E)-farnesyl diphosphate + H2O = Fe(II)-heme o + diphosphate. Its pathway is porphyrin-containing compound metabolism; heme O biosynthesis; heme O from protoheme: step 1/1. Its function is as follows. Converts heme B (protoheme IX) to heme O by substitution of the vinyl group on carbon 2 of heme B porphyrin ring with a hydroxyethyl farnesyl side group. The protein is Protoheme IX farnesyltransferase of Oceanobacillus iheyensis (strain DSM 14371 / CIP 107618 / JCM 11309 / KCTC 3954 / HTE831).